A 581-amino-acid polypeptide reads, in one-letter code: MSESWQQPPQTQPQQPQAPQPQHHAETPPALAEHTLPPGSAENPLGCAVYGILLQPDPGLQPPQHAPLQAGEPGPKCGVCGHDLAHLSSPHEHQCLAGHDRSFQCTQCLKIFHQATDLLEHQCVQAEQKPFVCGVCKMGFSLLTSLAQHHSSHTGMVKCSICDKTYKPAEAAEPATTTAPSLPSAPPPANIAPVEQPEKPYSCPVCQKPFKHLSELSRHERIHTGEKPYKCTLCDKSFSQSSHLVHHKRTHSSERPYKCAVCEKTFKHRSHLVRHMYAHSGEHHLFRCNVCELHFKESSELLQHPCTPSGERPFRCGECQKAFKRPSDLRQHERTHSAERPFKCDLCPMGFKQQYALMRHRRTHKTEEPFKCGLCEKGFGQPSHLLYHQHVHTLETLFKCPVCQKGFDQSAELLRHKCLPTSTERPFKCPVCNKAYKRASALQKHQLSHCAAAEKPLRCTLCERRFFSSSEFVQHRCDPAREKPLKCPDCEKRFKYASDLQRHRRVHTGEKPYKCPSCDKAFKQREHLNKHQGVHAREQQFKCVWCGERFLDVALLQEHSAQHSAAAAAAEGAYQVAACLP.

Low complexity predominate over residues 1–22; that stretch reads MSESWQQPPQTQPQQPQAPQPQ. The disordered stretch occupies residues 1 to 39; the sequence is MSESWQQPPQTQPQQPQAPQPQHHAETPPALAEHTLPPG. The C2H2-type 1 zinc-finger motif lies at 75–99; that stretch reads PKCGVCGHDLAHLSSPHEHQCLAGH. The C2H2-type 2; degenerate zinc-finger motif lies at 103–125; sequence FQCTQCLKIFHQATDLLEHQCVQ. Residue Lys-129 forms a Glycyl lysine isopeptide (Lys-Gly) (interchain with G-Cter in SUMO2) linkage. C2H2-type zinc fingers lie at residues 131 to 153, 201 to 223, 229 to 251, and 257 to 279; these read FVCG…HSSH, YSCP…ERIH, YKCT…KRTH, and YKCA…MYAH. Ser-280 is modified (phosphoserine). The C2H2-type 7; degenerate zinc-finger motif lies at 286 to 308; that stretch reads FRCNVCELHFKESSELLQHPCTP. 3 consecutive C2H2-type zinc fingers follow at residues 314–336, 342–364, and 370–392; these read FRCG…ERTH, FKCD…RRTH, and FKCG…QHVH. The segment at 398-420 adopts a C2H2-type 11; degenerate zinc-finger fold; it reads FKCPVCQKGFDQSAELLRHKCLP. The segment at 427 to 449 adopts a C2H2-type 12 zinc-finger fold; that stretch reads FKCPVCNKAYKRASALQKHQLSH. The C2H2-type 13; degenerate zinc-finger motif lies at 457–479; it reads LRCTLCERRFFSSSEFVQHRCDP. 3 C2H2-type zinc fingers span residues 485-507, 513-535, and 541-563; these read LKCP…RRVH, YKCP…QGVH, and FKCV…SAQH.

The protein belongs to the krueppel C2H2-type zinc-finger protein family.

The protein resides in the nucleus. Functionally, may be involved in transcriptional regulation. The polypeptide is Zinc finger protein 319 (Znf319) (Mus musculus (Mouse)).